The following is a 356-amino-acid chain: Protein RecA (356 aa).

Residue 68-75 (GPESSGKT) coordinates ATP.

It belongs to the RecA family.

It is found in the cytoplasm. Can catalyze the hydrolysis of ATP in the presence of single-stranded DNA, the ATP-dependent uptake of single-stranded DNA by duplex DNA, and the ATP-dependent hybridization of homologous single-stranded DNAs. It interacts with LexA causing its activation and leading to its autocatalytic cleavage. This Clostridium botulinum (strain Alaska E43 / Type E3) protein is Protein RecA.